The primary structure comprises 300 residues: 11-beta-hydroxysteroid dehydrogenase 1 (300 aa).

Residues 1–7 (MAFLKKY) lie on the Cytoplasmic side of the membrane. The helical; Signal-anchor for type II membrane protein transmembrane segment at 8–24 (LLTILMVFLAYYYYSAN) threads the bilayer. Over 25–300 (EKFRPEMLQG…SNEKLYGRWA (276 aa)) the chain is Lumenal. NADP(+) contacts are provided by residues 41 to 67 (GASKGIGREIAYHLAKMGAHVVVTARS), 92 to 93 (SM), and 119 to 123 (NHVLY). Serine 170 lines the substrate pocket. The Proton acceptor role is filled by tyrosine 183. 183–187 (YSASK) provides a ligand contact to NADP(+). An N-linked (GlcNAc...) asparagine glycan is attached at asparagine 207. 218–222 (IDTET) contributes to the NADP(+) binding site.

Belongs to the short-chain dehydrogenases/reductases (SDR) family. As to quaternary structure, homodimer. In terms of tissue distribution, widely expressed in all peripheral tissues, with highest expression in liver, followed by kidney and lung, and very low expression in heart, lung, spleen, stomach, small intestine, colon, skin, skeletal muscle, and ovary.

Its subcellular location is the endoplasmic reticulum membrane. It catalyses the reaction an 11beta-hydroxysteroid + NADP(+) = an 11-oxosteroid + NADPH + H(+). It carries out the reaction cortisone + NADPH + H(+) = cortisol + NADP(+). The enzyme catalyses corticosterone + NADP(+) = 11-dehydrocorticosterone + NADPH + H(+). The catalysed reaction is a 7beta-hydroxysteroid + NADP(+) = a 7-oxosteroid + NADPH + H(+). It catalyses the reaction 7-oxocholesterol + NADPH + H(+) = 7beta-hydroxycholesterol + NADP(+). It carries out the reaction chenodeoxycholate + NADP(+) = 7-oxolithocholate + NADPH + H(+). The enzyme catalyses 7-oxolithocholate + NADPH + H(+) = ursodeoxycholate + NADP(+). The catalysed reaction is glycochenodeoxycholate + NADP(+) = 7-oxoglycolithocholate + NADPH + H(+). It catalyses the reaction taurochenodeoxycholate + NADP(+) = 7-oxotaurolithocholate + NADPH + H(+). It carries out the reaction tauroursodeoxycholate + NADP(+) = 7-oxotaurolithocholate + NADPH + H(+). The enzyme catalyses glycoursodeoxycholate + NADP(+) = 7-oxoglycolithocholate + NADPH + H(+). The catalysed reaction is 7-oxopregnenolone + NADPH + H(+) = 7beta-hydroxypregnenolone + NADP(+). It catalyses the reaction 3beta,7alpha-dihydroxyandrost-5-en-17-one + NADP(+) = 3beta-hydroxy-5-androstene-7,17-dione + NADPH + H(+). It carries out the reaction 3beta-hydroxy-5-androstene-7,17-dione + NADPH + H(+) = 3beta,7beta-dihydroxyandrost-5-en-17-one + NADP(+). The enzyme catalyses 3beta-hydroxy-5alpha-androstane-7,17-dione + NADPH + H(+) = 3beta,7beta-dihydroxy-5alpha-androstan-17-one + NADP(+). In terms of biological role, controls the reversible conversion of biologically active glucocorticoids such as cortisone to cortisol, and 11-dehydrocorticosterone to corticosterone in the presence of NADP(H). Participates in the corticosteroid receptor-mediated anti-inflammatory response, as well as metabolic and homeostatic processes. Bidirectional in vitro, predominantly functions as a reductase in vivo, thereby increasing the concentration of active glucocorticoids. It has broad substrate specificity, besides glucocorticoids, it accepts other steroid and sterol substrates. Interconverts 7-oxo- and 7-hydroxy-neurosteroids such as 7-oxopregnenolone and 7beta-hydroxypregnenolone, 7-oxodehydroepiandrosterone (3beta-hydroxy-5-androstene-7,17-dione) and 7beta-hydroxydehydroepiandrosterone (3beta,7beta-dihydroxyandrost-5-en-17-one), among others. Catalyzes the stereo-specific conversion of the major dietary oxysterol, 7-ketocholesterol (7-oxocholesterol), into the more polar 7-beta-hydroxycholesterol metabolite. 7-oxocholesterol is one of the most important oxysterols, it participates in several events such as induction of apoptosis, accumulation in atherosclerotic lesions, lipid peroxidation, and induction of foam cell formation. Mediates the 7-oxo reduction of 7-oxolithocholate mainly to chenodeoxycholate, and to a lesser extent to ursodeoxycholate, both in its free form and when conjugated to glycine or taurine, providing a link between glucocorticoid activation and bile acid metabolism. Catalyzes the synthesis of 7-beta-25-dihydroxycholesterol from 7-oxo-25-hydroxycholesterol in vitro, which acts as a ligand for the G-protein-coupled receptor (GPCR) Epstein-Barr virus-induced gene 2 (EBI2) and may thereby regulate immune cell migration. In Cavia porcellus (Guinea pig), this protein is 11-beta-hydroxysteroid dehydrogenase 1 (HSD11B1).